The following is a 392-amino-acid chain: Formate-dependent phosphoribosylglycinamide formyltransferase (392 aa).

N(1)-(5-phospho-beta-D-ribosyl)glycinamide-binding positions include 20–21 (EL) and Glu-80. ATP-binding positions include Arg-112, Lys-153, 158–163 (SSGKGQ), 193–196 (EGFV), and Glu-201. Positions 117 to 306 (RLAAEELGLP…EFALHVRAIL (190 aa)) constitute an ATP-grasp domain. Residues Glu-265 and Glu-277 each coordinate Mg(2+). Residues Asp-284, Lys-355, and 362–363 (RR) each bind N(1)-(5-phospho-beta-D-ribosyl)glycinamide.

It belongs to the PurK/PurT family. Homodimer.

The catalysed reaction is N(1)-(5-phospho-beta-D-ribosyl)glycinamide + formate + ATP = N(2)-formyl-N(1)-(5-phospho-beta-D-ribosyl)glycinamide + ADP + phosphate + H(+). Its pathway is purine metabolism; IMP biosynthesis via de novo pathway; N(2)-formyl-N(1)-(5-phospho-D-ribosyl)glycinamide from N(1)-(5-phospho-D-ribosyl)glycinamide (formate route): step 1/1. Involved in the de novo purine biosynthesis. Catalyzes the transfer of formate to 5-phospho-ribosyl-glycinamide (GAR), producing 5-phospho-ribosyl-N-formylglycinamide (FGAR). Formate is provided by PurU via hydrolysis of 10-formyl-tetrahydrofolate. In Aeromonas salmonicida (strain A449), this protein is Formate-dependent phosphoribosylglycinamide formyltransferase.